We begin with the raw amino-acid sequence, 845 residues long: Molybdenum cofactor sulfurase (845 aa).

The residue at position 240 (lysine 240) is an N6-(pyridoxal phosphate)lysine. Cysteine 404 is an active-site residue. Residues 666 to 840 enclose the MOSC domain; it reads SFPQDSSPSS…LMVGDTVTPS (175 aa).

The protein belongs to the class-V pyridoxal-phosphate-dependent aminotransferase family. MOCOS subfamily. The cofactor is pyridoxal 5'-phosphate.

The enzyme catalyses Mo-molybdopterin + L-cysteine + AH2 = thio-Mo-molybdopterin + L-alanine + A + H2O. It functions in the pathway cofactor biosynthesis; molybdopterin biosynthesis. Sulfurates the molybdenum cofactor. Sulfation of molybdenum is essential for xanthine dehydrogenase (XDH) and aldehyde oxidase (ADO) enzymes in which molybdenum cofactor is liganded by 1 oxygen and 1 sulfur atom in active form. This Aspergillus clavatus (strain ATCC 1007 / CBS 513.65 / DSM 816 / NCTC 3887 / NRRL 1 / QM 1276 / 107) protein is Molybdenum cofactor sulfurase.